The chain runs to 1684 residues: Latrophilin Cirl (1684 aa).

Over 1 to 765 (MASNNYIQIM…LFTMFDGNMR (765 aa)) the chain is Extracellular. One can recognise an SUEL-type lectin domain in the interval 21–110 (ACEGKKLTIE…KYLEAHYQCV (90 aa)). Asn138, Asn251, Asn297, and Asn336 each carry an N-linked (GlcNAc...) asparagine glycan. The segment at 181 to 300 (PPATHATPPG…GPSVSSNGSA (120 aa)) is disordered. Composition is skewed to polar residues over residues 250-260 (SNATAPSNTRI) and 278-300 (KSSPNRTPGTAASGPSVSSNGSA). The disordered stretch occupies residues 370-391 (SFDEDDEEMAGTSTTTPMSTSS). A compositionally biased stretch (low complexity) spans 381-391 (TSTTTPMSTSS). N-linked (GlcNAc...) asparagine glycosylation is found at Asn396, Asn653, Asn701, and Asn728. The 194-residue stretch at 559–752 (RSVVQKVKNI…AILMDVVDEH (194 aa)) folds into the GAIN-B domain. Cystine bridges form between Cys707–Cys734 and Cys722–Cys736. Residues 707–752 (CVFWNYIDHAWSANGCSLESTNRTHSVCSCNHLTNFAILMDVVDEH) form a GPS region. A helical membrane pass occupies residues 766–786 (IFIYISIAICVVFIVIALLTL). Residues 787 to 799 (KLFNGVFVKSART) are Cytoplasmic-facing. A helical transmembrane segment spans residues 800 to 820 (SIYINIYICLLAIELLFLLGI). Topologically, residues 821-826 (EQTETS) are extracellular. A helical membrane pass occupies residues 827 to 847 (IFCGFITVFLHCAILSGTSWF). The Cytoplasmic portion of the chain corresponds to 848–873 (CYEAFHSYSTLTSDELLLEVDQTPKV). The chain crosses the membrane as a helical span at residues 874–894 (NCYYLLSYGLSLSVVAISLVI). Over 895 to 918 (NPSTYTQNDYCVLMEANAVFYATF) the chain is Extracellular. Residues 919-939 (VAPVLIFFMAAIGYTFLSWII) traverse the membrane as a helical segment. The Cytoplasmic portion of the chain corresponds to 940 to 966 (MCRKSRTGLKTKEHTRLATVRFDIRCS). A helical membrane pass occupies residues 967-987 (FVFFLLLSAVWCSAYFYLRGA). Topologically, residues 988–994 (KMDEDVT) are extracellular. A helical membrane pass occupies residues 995 to 1015 (GIYGYNFICFNTLLGLYIFVF). Residues 1016–1684 (HCIQNEKIRR…VRCYLEPLAK (669 aa)) lie on the Cytoplasmic side of the membrane. The interval 1080-1100 (PLGTNDDAHDEQQQQQHMSAT) is disordered. Ser1156, Ser1247, and Ser1254 each carry phosphoserine. Disordered stretches follow at residues 1228-1255 (KPNSQHGKKKRGGVGAIPASPSGSLHSR), 1270-1353 (KTKP…APPP), 1441-1520 (SRYG…LPPQ), and 1587-1669 (SMRG…SAML). The span at 1298–1314 (QQQQQLRQQRQQQQQQL) shows a compositional bias: low complexity. Phosphoserine occurs at positions 1315 and 1316. The segment covering 1328–1348 (LHLQHQQQQQQQRRAGGQQQL) has biased composition (low complexity). Over residues 1455–1466 (RNQQQQQHSLAQ) the composition is skewed to polar residues. Acidic residues-rich tracts occupy residues 1476–1489 (DEDDDEDEDDEETT) and 1499–1512 (CDEEEEDEESDMED). The span at 1631-1654 (QQLQKLSPQSTTSSSSHTSHSNPH) shows a compositional bias: low complexity.

The protein belongs to the G-protein coupled receptor 2 family. LN-TM7 subfamily. Forms a heterodimer, consisting of a large extracellular region non-covalently linked to a seven-transmembrane moiety. Post-translationally, proteolytically cleaved into 2 subunits, an extracellular subunit and a seven-transmembrane subunit.

The protein localises to the cell membrane. This is Latrophilin Cirl from Drosophila persimilis (Fruit fly).